The sequence spans 333 residues: Photosystem II assembly lipoprotein Ycf48 (333 aa).

Positions 1-23 (MTRFVSSAINLLLVLVLGVSLSG) are cleaved as a signal peptide. The N-palmitoyl cysteine moiety is linked to residue cysteine 24. A lipid anchor (S-diacylglycerol cysteine) is attached at cysteine 24.

The protein belongs to the Ycf48 family. Part of early PSII assembly complexes which includes D1 (psbA) and PsbI; not found in mature PSII. Binds to the lumenal side of PSII complexes. Interacts with YidC.

Its subcellular location is the cellular thylakoid membrane. Its function is as follows. A factor required for optimal assembly of photosystem II (PSII), acting in the early stages of PSII assembly. Also plays a role in replacement of photodamaged D1 (psbA). Assists YidC in synthesis of chlorophyll-binding proteins. The protein is Photosystem II assembly lipoprotein Ycf48 of Parasynechococcus marenigrum (strain WH8102).